A 411-amino-acid chain; its full sequence is S-adenosylmethionine synthase (411 aa).

Histidine 15 lines the ATP pocket. Mg(2+) is bound at residue aspartate 17. Glutamate 43 provides a ligand contact to K(+). Residues glutamate 56 and glutamine 99 each coordinate L-methionine. The interval 99–109 (QSPDIAQGVDT) is flexible loop. Residues 174–176 (DGK), 247–248 (RF), aspartate 256, 262–263 (RK), alanine 279, and lysine 283 contribute to the ATP site. L-methionine is bound at residue aspartate 256. Lysine 287 lines the L-methionine pocket.

This sequence belongs to the AdoMet synthase family. As to quaternary structure, homotetramer; dimer of dimers. Mg(2+) is required as a cofactor. K(+) serves as cofactor.

It is found in the cytoplasm. The catalysed reaction is L-methionine + ATP + H2O = S-adenosyl-L-methionine + phosphate + diphosphate. Its pathway is amino-acid biosynthesis; S-adenosyl-L-methionine biosynthesis; S-adenosyl-L-methionine from L-methionine: step 1/1. In terms of biological role, catalyzes the formation of S-adenosylmethionine (AdoMet) from methionine and ATP. The overall synthetic reaction is composed of two sequential steps, AdoMet formation and the subsequent tripolyphosphate hydrolysis which occurs prior to release of AdoMet from the enzyme. The chain is S-adenosylmethionine synthase from Streptomyces spectabilis.